The following is a 270-amino-acid chain: Putative pyruvate, phosphate dikinase regulatory protein 2 (270 aa).

151-158 is a binding site for ADP; sequence GVSRTSKT.

It belongs to the pyruvate, phosphate/water dikinase regulatory protein family. PDRP subfamily.

The catalysed reaction is N(tele)-phospho-L-histidyl/L-threonyl-[pyruvate, phosphate dikinase] + ADP = N(tele)-phospho-L-histidyl/O-phospho-L-threonyl-[pyruvate, phosphate dikinase] + AMP + H(+). The enzyme catalyses N(tele)-phospho-L-histidyl/O-phospho-L-threonyl-[pyruvate, phosphate dikinase] + phosphate + H(+) = N(tele)-phospho-L-histidyl/L-threonyl-[pyruvate, phosphate dikinase] + diphosphate. Functionally, bifunctional serine/threonine kinase and phosphorylase involved in the regulation of the pyruvate, phosphate dikinase (PPDK) by catalyzing its phosphorylation/dephosphorylation. The sequence is that of Putative pyruvate, phosphate dikinase regulatory protein 2 from Listeria monocytogenes serotype 4b (strain F2365).